The following is a 440-amino-acid chain: Thymidine phosphorylase (440 aa).

This sequence belongs to the thymidine/pyrimidine-nucleoside phosphorylase family. As to quaternary structure, homodimer.

It carries out the reaction thymidine + phosphate = 2-deoxy-alpha-D-ribose 1-phosphate + thymine. Its pathway is pyrimidine metabolism; dTMP biosynthesis via salvage pathway; dTMP from thymine: step 1/2. The enzymes which catalyze the reversible phosphorolysis of pyrimidine nucleosides are involved in the degradation of these compounds and in their utilization as carbon and energy sources, or in the rescue of pyrimidine bases for nucleotide synthesis. The polypeptide is Thymidine phosphorylase (Salmonella arizonae (strain ATCC BAA-731 / CDC346-86 / RSK2980)).